Consider the following 417-residue polypeptide: Glutamyl-tRNA reductase (417 aa).

Residues 49-52 (TCNR), Ser107, 112-114 (EEQ), and Gln118 contribute to the substrate site. Cys50 functions as the Nucleophile in the catalytic mechanism. 187 to 192 (GTGEVS) contacts NADP(+).

The protein belongs to the glutamyl-tRNA reductase family. In terms of assembly, homodimer.

The catalysed reaction is (S)-4-amino-5-oxopentanoate + tRNA(Glu) + NADP(+) = L-glutamyl-tRNA(Glu) + NADPH + H(+). It functions in the pathway porphyrin-containing compound metabolism; protoporphyrin-IX biosynthesis; 5-aminolevulinate from L-glutamyl-tRNA(Glu): step 1/2. Catalyzes the NADPH-dependent reduction of glutamyl-tRNA(Glu) to glutamate 1-semialdehyde (GSA). In Cenarchaeum symbiosum (strain A), this protein is Glutamyl-tRNA reductase.